A 289-amino-acid chain; its full sequence is Glycerol facilitator-aquaporin gla (289 aa).

The next 2 membrane-spanning stretches (helical) occupy residues Ile10–Val30 and Ser41–Gly61. Residues Asn68–Ala70 carry the NPA 1 motif. The next 3 helical transmembrane spans lie at Ala87–Val107, Phe151–Ser171, and Met209–Pro229. The short motif at Asn235–Ala237 is the NPA 2 element. The chain crosses the membrane as a helical span at residues Trp264–Phe284.

Belongs to the MIP/aquaporin (TC 1.A.8) family.

The protein resides in the cell membrane. Its function is as follows. Mixed channel protein that transports both water and glycerol. The chain is Glycerol facilitator-aquaporin gla (gla) from Lactococcus lactis subsp. cremoris (Streptococcus cremoris).